The chain runs to 415 residues: Pectin acetylesterase 12 (415 aa).

An N-terminal signal peptide occupies residues 1 to 20; sequence MVKLLLVGFVVAGIILGTQA. Asn27 is a glycosylation site (N-linked (GlcNAc...) asparagine). Residues Ser197, Asp293, and His360 each act as charge relay system in the active site.

This sequence belongs to the pectinacetylesterase family.

It localises to the secreted. The protein localises to the cell wall. Functionally, hydrolyzes acetyl esters in homogalacturonan regions of pectin. In type I primary cell wall, galacturonic acid residues of pectin can be acetylated at the O-2 and O-3 positions. Decreasing the degree of acetylation of pectin gels in vitro alters their physical properties. The polypeptide is Pectin acetylesterase 12 (Arabidopsis thaliana (Mouse-ear cress)).